The chain runs to 522 residues: Peptide methionine sulfoxide reductase MsrA/MsrB (522 aa).

One can recognise a Thioredoxin domain in the interval 17 to 174 (LALGACSPKI…ALALIRDPNA (158 aa)). The cysteines at positions 68 and 71 are disulfide-linked. The tract at residues 199–354 (RTIYLAGGCF…PNGYCHIDIR (156 aa)) is peptide methionine sulfoxide reductase A. Residue cysteine 207 is part of the active site. The MsrB domain maps to 383 to 506 (DAELKRTLTE…NGASLKFIPL (124 aa)). Cysteine 440 and cysteine 495 are disulfide-bonded. Residue cysteine 495 is the Nucleophile of the active site.

This sequence in the N-terminal section; belongs to the thioredoxin family. The protein in the central section; belongs to the MsrA Met sulfoxide reductase family. It in the C-terminal section; belongs to the MsrB Met sulfoxide reductase family.

The enzyme catalyses L-methionyl-[protein] + [thioredoxin]-disulfide + H2O = L-methionyl-(S)-S-oxide-[protein] + [thioredoxin]-dithiol. It catalyses the reaction [thioredoxin]-disulfide + L-methionine + H2O = L-methionine (S)-S-oxide + [thioredoxin]-dithiol. It carries out the reaction L-methionyl-[protein] + [thioredoxin]-disulfide + H2O = L-methionyl-(R)-S-oxide-[protein] + [thioredoxin]-dithiol. In terms of biological role, has an important function as a repair enzyme for proteins that have been inactivated by oxidation. Catalyzes the reversible oxidation-reduction of methionine sulfoxide in proteins to methionine. The polypeptide is Peptide methionine sulfoxide reductase MsrA/MsrB (msrAB) (Neisseria meningitidis serogroup A / serotype 4A (strain DSM 15465 / Z2491)).